We begin with the raw amino-acid sequence, 184 residues long: GTP cyclohydrolase 1 (184 aa).

Zn(2+) contacts are provided by Cys-74, His-77, and Cys-145.

It belongs to the GTP cyclohydrolase I family. Toroid-shaped homodecamer, composed of two pentamers of five dimers.

It catalyses the reaction GTP + H2O = 7,8-dihydroneopterin 3'-triphosphate + formate + H(+). It functions in the pathway cofactor biosynthesis; 7,8-dihydroneopterin triphosphate biosynthesis; 7,8-dihydroneopterin triphosphate from GTP: step 1/1. The polypeptide is GTP cyclohydrolase 1 (folE) (Aquifex aeolicus (strain VF5)).